The following is an 83-amino-acid chain: MSSGGLLLLLGLLTLWAELTPVSSKDHPEFCELPADSGPCRGILHAFYYHPVHRTCLEFIYGGCYGNANNFKTIDECKRTCAA.

Positions 1–24 (MSSGGLLLLLGLLTLWAELTPVSS) are cleaved as a signal peptide. Positions 31–81 (CELPADSGPCRGILHAFYYHPVHRTCLEFIYGGCYGNANNFKTIDECKRTC) constitute a BPTI/Kunitz inhibitor domain. 3 disulfides stabilise this stretch: Cys-31–Cys-81, Cys-40–Cys-64, and Cys-56–Cys-77.

The protein belongs to the venom Kunitz-type family. As to expression, expressed by the venom gland.

Its subcellular location is the secreted. Functionally, serine protease inhibitor. This Notechis scutatus scutatus (Mainland tiger snake) protein is Kunitz-type serine protease inhibitor tigerin-1.